Here is a 493-residue protein sequence, read N- to C-terminus: MKEMEVRAFKDDIKKYKGKSVAVFVYEGDLKPLARLSKGTSNKAKRVAELENFKGKEGEILKVPTLGTSVDFVYIVGLGKKEKVGEDTYRRASANLVKRMRRDKVESTVVVIPRRGDVSKEITKAITEGAILGNYRFDKYKSKKEDEKFEIKEVLINRGDEEGIRLGKIFAEAQNYARNLVNEPGNVINPITLAEEAKKLAEEFGLECKVYDEKQIQEMGMMALYSVGKGSATPPRFIHLIYKPSGKPKEKIALVGKGLTFDSGGLNIKPGDYMRTMKMDKSGACAVLGIMRAIAQLKPDVEVHGLIGAAENMPDGNAYRPDDVIKAKNGKYIEIDNTDAEGRVTLADVLSYASELKPDKIIDMATLTGACMVALGEYTAGLFTNAPDFAEEIKKTAKRTGERVWELPMDDERLRKKIKNTVADVLNTGGRYGGAITAAMFLEEFVGEGIKWVHLDIAGPAWSKEEYGYYTKGGTGFGVRTCLEYIMKVSSNV.

Lys257 and Asp262 together coordinate Mn(2+). The active site involves Lys269. Mn(2+) contacts are provided by Asp280, Asp339, and Glu341. Arg343 is an active-site residue.

Belongs to the peptidase M17 family. Requires Mn(2+) as cofactor.

It localises to the cytoplasm. It carries out the reaction Release of an N-terminal amino acid, Xaa-|-Yaa-, in which Xaa is preferably Leu, but may be other amino acids including Pro although not Arg or Lys, and Yaa may be Pro. Amino acid amides and methyl esters are also readily hydrolyzed, but rates on arylamides are exceedingly low.. It catalyses the reaction Release of an N-terminal amino acid, preferentially leucine, but not glutamic or aspartic acids.. In terms of biological role, presumably involved in the processing and regular turnover of intracellular proteins. Catalyzes the removal of unsubstituted N-terminal amino acids from various peptides. The polypeptide is Probable cytosol aminopeptidase (pepA) (Aquifex aeolicus (strain VF5)).